Reading from the N-terminus, the 296-residue chain is GTPase Era (296 aa).

One can recognise an Era-type G domain in the interval 3 to 170 (KSGFVTIVGR…KELMFKYIPE (168 aa)). The interval 11 to 18 (GRPNVGKS) is G1. Position 11-18 (11-18 (GRPNVGKS)) interacts with GTP. The G2 stretch occupies residues 37 to 41 (QTTRN). A G3 region spans residues 58–61 (DTPG). Residues 58–62 (DTPGI) and 120–123 (NKID) contribute to the GTP site. The G4 stretch occupies residues 120-123 (NKID). The interval 149 to 151 (ISA) is G5. The KH type-2 domain occupies 201 to 278 (LSEEVPHGIA…YIRLWVKVKE (78 aa)).

The protein belongs to the TRAFAC class TrmE-Era-EngA-EngB-Septin-like GTPase superfamily. Era GTPase family. Monomer.

It localises to the cytoplasm. It is found in the cell membrane. Functionally, an essential GTPase that binds both GDP and GTP, with rapid nucleotide exchange. Plays a role in 16S rRNA processing and 30S ribosomal subunit biogenesis and possibly also in cell cycle regulation and energy metabolism. This is GTPase Era from Clostridium botulinum (strain Loch Maree / Type A3).